The sequence spans 635 residues: BTB/POZ domain and ankyrin repeat-containing protein NPR2 (635 aa).

The region spanning 97–191 (SDADVDVADG…LYTGKLRPAP (95 aa)) is the BTB domain. Positions 138–152 (AAGGGGGGGGGGGER) are enriched in gly residues. The tract at residues 138-157 (AAGGGGGGGGGGGERTGGRP) is disordered. The C2HC NPR-type zinc-finger motif lies at 194-208 (VVSCADPMCPHDSCP). Zn(2+) is bound by residues Cys197, Cys202, His204, and Cys207. ANK repeat units lie at residues 317–347 (KRVR…TLDD), 349–376 (NALH…NLNL), and 380–409 (RGYT…AVSQ). Residues 439–576 (ESNKDRLCID…FLEDDLPDSP (138 aa)) form a salicylic acid-binding core (SBC) region. Salicylate is bound at residue Arg484.

Belongs to the plant 'ANKYRIN-BTB/POZ' family. 'NPR1-like' subfamily. Interacts with NRR. Interacts with TGAL1 and TGAL11.

Its subcellular location is the nucleus. It functions in the pathway protein modification; protein ubiquitination. In terms of biological role, salicylic acid (SA)-binding substrate-specific adapter of an E3 ubiquitin-protein ligase complex (CUL3-RBX1-BTB) which mediates the ubiquitination and subsequent proteasomal degradation of target proteins. May be involved in regulating basal defense responses against pathogens, and may be involved in crosstalk between SA- and JA-dependent signaling pathways. Does not seem to be involved in defense response against the bacterial blight disease caused by Xanthomonas oryzae pv. oryzae (Xoo). Over-expression of NPR2/NH2 does not confer disease resistance to Xoo. This chain is BTB/POZ domain and ankyrin repeat-containing protein NPR2, found in Oryza sativa subsp. japonica (Rice).